The following is a 277-amino-acid chain: MIKLGSHVSFKKPNYLAGAAGESINNKANTMMIYLGAPQTTKRVEFELYKKQEYLDFYAKDIPAEDIIVHAPYIINPANPTKAKFSCDFLIQEINRMNYINAKYLVLHPGAYTEFAPQEALDQLVKSLTHILSKTKDVVICIETMAGKGTEIGINFEQISYLINKLNSDRIAICLDTCHLWDAGYNLKDYQSFKDELKKWNLLKHVKVIHLNDSKNELSSHKDRHANIDQGHIGLETLAKFVHDKDFDNIPIILETPYVDNKPIYDVEIQMLLNKKP.

Zn(2+) is bound by residues histidine 70, histidine 108, glutamate 143, aspartate 176, histidine 179, histidine 210, aspartate 223, histidine 225, and glutamate 255.

Belongs to the AP endonuclease 2 family. Zn(2+) is required as a cofactor.

It catalyses the reaction Endonucleolytic cleavage to 5'-phosphooligonucleotide end-products.. Its function is as follows. Endonuclease IV plays a role in DNA repair. It cleaves phosphodiester bonds at apurinic or apyrimidinic (AP) sites, generating a 3'-hydroxyl group and a 5'-terminal sugar phosphate. In Mycoplasmopsis synoviae (strain 53) (Mycoplasma synoviae), this protein is Probable endonuclease 4.